Consider the following 906-residue polypeptide: Coatomer subunit beta' (906 aa).

WD repeat units follow at residues 13–52 (ARSDRVKSVDLHPTEPWMLASLYNGSVCVWNHETQTLVKT), 55–94 (VCDLPVRAAKFVARKNWVVTGADDMQIRVFNYNTLERVHM), 97–136 (AHSDYIRCIAVHPTQPFILTSSDDMLIKLWDWDKKWSCSQ), 140–180 (GHTH…PNFT), 183–224 (GHEK…CVQT), 227–266 (GHAQNVSCASFHPELPIIITGSEDGTVRIWHSSTYRLEST), 350–388 (SCEIYPQTIQHNPNGRFVVVCGDGEYIIYTAMALRNKSF), and 390–425 (SAQEFAWAHDSSEYAIRESNSIVKIFKNFKEKKSFK). The residue at position 627 (lysine 627) is an N6-acetyllysine. The stretch at 746–783 (IRTGRLPEAAFLARTYLPSQVSRVVKLWRENLSKVNQK) is one WD 9 repeat. Residues 837 to 863 (EEAKGFQPSRSTAQQELDGKPASPTPV) are disordered. A Phosphoserine modification is found at serine 859. The residue at position 861 (threonine 861) is a Phosphothreonine. Residues 866–890 (ASHTANKEEKSLLELEVDLDNLELV) are a coiled coil.

The protein belongs to the WD repeat COPB2 family. In terms of assembly, oligomeric complex that consists of at least the alpha, beta, beta', gamma, delta, epsilon and zeta subunits. Probably interacts with PEX11A. Interacts with SCYL1. Interacts with JAGN1.

Its subcellular location is the cytoplasm. It is found in the cytosol. It localises to the golgi apparatus membrane. The protein localises to the cytoplasmic vesicle. The protein resides in the COPI-coated vesicle membrane. In terms of biological role, the coatomer is a cytosolic protein complex that binds to dilysine motifs and reversibly associates with Golgi non-clathrin-coated vesicles, which further mediate biosynthetic protein transport from the ER, via the Golgi up to the trans Golgi network. Coatomer complex is required for budding from Golgi membranes, and is essential for the retrograde Golgi-to-ER transport of dilysine-tagged proteins. In mammals, the coatomer can only be recruited by membranes associated to ADP-ribosylation factors (ARFs), which are small GTP-binding proteins; the complex also influences the Golgi structural integrity, as well as the processing, activity, and endocytic recycling of LDL receptors. Its function is as follows. This coatomer complex protein, essential for Golgi budding and vesicular trafficking, is a selective binding protein (RACK) for protein kinase C, epsilon type. It binds to Golgi membranes in a GTP-dependent manner. This chain is Coatomer subunit beta' (COPB2), found in Pongo abelii (Sumatran orangutan).